Consider the following 406-residue polypeptide: MAKKEVKKIVLAYSGGLDTSIILKWLKNEYGCEVITFSADLGQGDELTPIRDKAFATGADKVYIDDLREEFVRDFVFPMFRANAIYEGHYLLGTSIARPLIAKRQMEIAKIEGADAVSHGATGKGNDQVRFELGYYHFNPAITVIAPWRDWKLNSRQALINYAKKNDIPIPVTKKRPWSSDRNLLHISFEGAILEDTWAEAPENMYVLTKSPEKAPNKPQYVEIEFRNGNAVAVDGEAMSPAQLLAHLNFIGGEHGIGRVDLLENRSVGMKSRGVYETPGGTILREAHMAVEQITMDREVMHLRDSLIPRYAEMVYNGYWFSPEREMLQTMIDESQKTVNGVARVKLYKGHCRTVGRKSETDSLFNLDFATFEKDQVYNQKDAEGFIKLNSLRLRIRSLMQAAKKK.

ATP is bound by residues alanine 12–serine 20 and alanine 39. L-citrulline is bound by residues tyrosine 90 and serine 95. Position 120 (glycine 120) interacts with ATP. L-aspartate contacts are provided by threonine 122, asparagine 126, and aspartate 127. An L-citrulline-binding site is contributed by asparagine 126. The L-citrulline site is built by arginine 130, serine 179, serine 188, glutamate 264, and tyrosine 276.

This sequence belongs to the argininosuccinate synthase family. Type 1 subfamily. Homotetramer.

The protein resides in the cytoplasm. It catalyses the reaction L-citrulline + L-aspartate + ATP = 2-(N(omega)-L-arginino)succinate + AMP + diphosphate + H(+). It functions in the pathway amino-acid biosynthesis; L-arginine biosynthesis; L-arginine from L-ornithine and carbamoyl phosphate: step 2/3. In Geotalea uraniireducens (strain Rf4) (Geobacter uraniireducens), this protein is Argininosuccinate synthase.